A 340-amino-acid chain; its full sequence is Heat-inducible transcription repressor HrcA (340 aa).

It belongs to the HrcA family.

Negative regulator of class I heat shock genes (grpE-dnaK-dnaJ and groELS operons). Prevents heat-shock induction of these operons. This Mycoplasma mycoides subsp. mycoides SC (strain CCUG 32753 / NCTC 10114 / PG1) protein is Heat-inducible transcription repressor HrcA.